The following is a 930-amino-acid chain: Protein translocase subunit SecA (930 aa).

ATP-binding positions include Gln-87, 105–109 (GEGKT), and Asp-516. Positions 914, 916, 925, and 926 each coordinate Zn(2+).

This sequence belongs to the SecA family. As to quaternary structure, monomer and homodimer. Part of the essential Sec protein translocation apparatus which comprises SecA, SecYEG and auxiliary proteins SecDF-YajC and YidC. It depends on Zn(2+) as a cofactor.

The protein resides in the cell inner membrane. Its subcellular location is the cytoplasm. It catalyses the reaction ATP + H2O + cellular proteinSide 1 = ADP + phosphate + cellular proteinSide 2.. Its function is as follows. Part of the Sec protein translocase complex. Interacts with the SecYEG preprotein conducting channel. Has a central role in coupling the hydrolysis of ATP to the transfer of proteins into and across the cell membrane, serving both as a receptor for the preprotein-SecB complex and as an ATP-driven molecular motor driving the stepwise translocation of polypeptide chains across the membrane. This chain is Protein translocase subunit SecA, found in Variovorax paradoxus (strain S110).